The primary structure comprises 337 residues: Phosphate acyltransferase (337 aa).

It belongs to the PlsX family. Homodimer. Probably interacts with PlsY.

The protein localises to the cytoplasm. The catalysed reaction is a fatty acyl-[ACP] + phosphate = an acyl phosphate + holo-[ACP]. The protein operates within lipid metabolism; phospholipid metabolism. Catalyzes the reversible formation of acyl-phosphate (acyl-PO(4)) from acyl-[acyl-carrier-protein] (acyl-ACP). This enzyme utilizes acyl-ACP as fatty acyl donor, but not acyl-CoA. The protein is Phosphate acyltransferase of Listeria welshimeri serovar 6b (strain ATCC 35897 / DSM 20650 / CCUG 15529 / CIP 8149 / NCTC 11857 / SLCC 5334 / V8).